A 111-amino-acid polypeptide reads, in one-letter code: Class I hydrophobin 10 (111 aa).

The signal sequence occupies residues 1-17; that stretch reads MLFNTFVVTALASLAAA. 4 disulfides stabilise this stretch: Cys-30-Cys-90, Cys-37-Cys-84, Cys-38-Cys-71, and Cys-91-Cys-104.

It belongs to the fungal hydrophobin family. Self-assembles to form functional amyloid fibrils called rodlets. Self-assembly into fibrillar rodlets occurs spontaneously at hydrophobic:hydrophilic interfaces and the rodlets further associate laterally to form amphipathic monolayers.

The protein localises to the secreted. It localises to the cell wall. Aerial growth, conidiation, and dispersal of filamentous fungi in the environment rely upon a capability of their secreting small amphipathic proteins called hydrophobins (HPBs) with low sequence identity. Class I can self-assemble into an outermost layer of rodlet bundles on aerial cell surfaces, conferring cellular hydrophobicity that supports fungal growth, development and dispersal; whereas Class II form highly ordered films at water-air interfaces through intermolecular interactions but contribute nothing to the rodlet structure. This is Class I hydrophobin 10 from Pleurotus ostreatus (strain PC15) (Oyster mushroom).